The following is a 287-amino-acid chain: Succinate--CoA ligase [ADP-forming] subunit alpha 2 (287 aa).

Residues 17-20, Lys43, and 96-98 contribute to the CoA site; these read TGYQ and ITE. Tyr159 serves as a coordination point for substrate. The active-site Tele-phosphohistidine intermediate is His246.

This sequence belongs to the succinate/malate CoA ligase alpha subunit family. As to quaternary structure, heterotetramer of two alpha and two beta subunits.

The catalysed reaction is succinate + ATP + CoA = succinyl-CoA + ADP + phosphate. The enzyme catalyses GTP + succinate + CoA = succinyl-CoA + GDP + phosphate. It participates in carbohydrate metabolism; tricarboxylic acid cycle; succinate from succinyl-CoA (ligase route): step 1/1. Its function is as follows. Succinyl-CoA synthetase functions in the citric acid cycle (TCA), coupling the hydrolysis of succinyl-CoA to the synthesis of either ATP or GTP and thus represents the only step of substrate-level phosphorylation in the TCA. The alpha subunit of the enzyme binds the substrates coenzyme A and phosphate, while succinate binding and nucleotide specificity is provided by the beta subunit. The chain is Succinate--CoA ligase [ADP-forming] subunit alpha 2 from Archaeoglobus fulgidus (strain ATCC 49558 / DSM 4304 / JCM 9628 / NBRC 100126 / VC-16).